A 336-amino-acid polypeptide reads, in one-letter code: Anthranilate phosphoribosyltransferase (336 aa).

5-phospho-alpha-D-ribose 1-diphosphate contacts are provided by residues Gly79, 82 to 83, Thr87, 89 to 92, 107 to 115, and Ala119; these read GD, NIST, and KHGNRCVSS. Gly79 lines the anthranilate pocket. Ser91 provides a ligand contact to Mg(2+). Asn110 provides a ligand contact to anthranilate. Residue Arg165 participates in anthranilate binding. The Mg(2+) site is built by Asp224 and Glu225.

Belongs to the anthranilate phosphoribosyltransferase family. In terms of assembly, homodimer. Requires Mg(2+) as cofactor.

The catalysed reaction is N-(5-phospho-beta-D-ribosyl)anthranilate + diphosphate = 5-phospho-alpha-D-ribose 1-diphosphate + anthranilate. The protein operates within amino-acid biosynthesis; L-tryptophan biosynthesis; L-tryptophan from chorismate: step 2/5. Functionally, catalyzes the transfer of the phosphoribosyl group of 5-phosphorylribose-1-pyrophosphate (PRPP) to anthranilate to yield N-(5'-phosphoribosyl)-anthranilate (PRA). This chain is Anthranilate phosphoribosyltransferase, found in Lachnoclostridium phytofermentans (strain ATCC 700394 / DSM 18823 / ISDg) (Clostridium phytofermentans).